The chain runs to 490 residues: MSSLTSLTLKGALDGLEKGDFTSVELTRAHIDAIEAARGLNAFLLETPEQALSMAAASDARRALDAARPLDGIPLGIKDLFCTQGVRTTAASKILEPFVPQYESTVTSQLWRDGAVMLGKLNLDEFAMGSSNETSAYGPVVNPWRKAGSNQALTPGGSSGGSAAAVAADLCLGATATDTGGSIRQPAAFTGTVGIKPTYGRCSRWGVVAFASSLDQAGPIAKTVTDAALLLTSMSGHDPKDSTSLDVPVPDFSAFVGKSIKGLRIGVPQEYRVDGMPAEIEKLWADGIAWLKDAGCEIVEISLPHTKYALPAYYIVAPAEASSNLARYDGMRYGLRAEGSNLTEVYENTRAEGFGDEVKRRILIGTYVLSAGYYDAYYLKALKVRRRIAEDFDNAWERCDAILTPTAPSAAFGLGENSSDPIAMYLNDVFTVTTNLAGLPGLSLPAGLDANGLPLGLQIIGKPLDEGTVFSVAGVLEKAAGFTAKATKWW.

Active-site charge relay system residues include K78 and S158. The active-site Acyl-ester intermediate is the S182.

It belongs to the amidase family. GatA subfamily. Heterotrimer of A, B and C subunits.

It catalyses the reaction L-glutamyl-tRNA(Gln) + L-glutamine + ATP + H2O = L-glutaminyl-tRNA(Gln) + L-glutamate + ADP + phosphate + H(+). Its function is as follows. Allows the formation of correctly charged Gln-tRNA(Gln) through the transamidation of misacylated Glu-tRNA(Gln) in organisms which lack glutaminyl-tRNA synthetase. The reaction takes place in the presence of glutamine and ATP through an activated gamma-phospho-Glu-tRNA(Gln). In Caulobacter sp. (strain K31), this protein is Glutamyl-tRNA(Gln) amidotransferase subunit A.